The chain runs to 492 residues: N-succinylglutamate 5-semialdehyde dehydrogenase (492 aa).

220–225 (GSASTG) provides a ligand contact to NAD(+). Active-site residues include glutamate 243 and cysteine 277.

The protein belongs to the aldehyde dehydrogenase family. AstD subfamily.

The enzyme catalyses N-succinyl-L-glutamate 5-semialdehyde + NAD(+) + H2O = N-succinyl-L-glutamate + NADH + 2 H(+). Its pathway is amino-acid degradation; L-arginine degradation via AST pathway; L-glutamate and succinate from L-arginine: step 4/5. Catalyzes the NAD-dependent reduction of succinylglutamate semialdehyde into succinylglutamate. The polypeptide is N-succinylglutamate 5-semialdehyde dehydrogenase (Salmonella gallinarum (strain 287/91 / NCTC 13346)).